The sequence spans 286 residues: Probable transport system permease protein NifC (286 aa).

6 helical membrane passes run 34 to 54 (LFLA…ISMI), 75 to 95 (IILS…IGTP), 114 to 134 (IFVE…LLLA), 152 to 172 (VIFT…ALYV), 216 to 236 (GLIL…MFAG), and 257 to 277 (IKMA…LLLL). Positions 75-278 (IILSFVTSLI…IMTFVLLLLV (204 aa)) constitute an ABC transmembrane type-1 domain.

It belongs to the binding-protein-dependent transport system permease family. CysTW subfamily.

It is found in the cell membrane. Its function is as follows. May be involved in molybdenum transport. This chain is Probable transport system permease protein NifC (nifC), found in Clostridium pasteurianum.